The sequence spans 479 residues: Probable phosphatidate cytidylyltransferase (479 aa).

Positions 1–28 (MRTDNIRNRKEQLKKQEKKDFDSSKDEE) are enriched in basic and acidic residues. The disordered stretch occupies residues 1–71 (MRTDNIRNRK…NNNNNNNNIK (71 aa)). Residues 1–108 (MRTDNIRNRK…LAIRSVMGAF (108 aa)) are Cytoplasmic-facing. A compositionally biased stretch (low complexity) spans 53–69 (NKNIINQKTNNNNNNNN). A helical transmembrane segment spans residues 109-129 (MIGFFTIVLSTDHFIVALFVI). The Extracellular portion of the chain corresponds to 130–159 (ALQLLVFKEMIALRYIEAKEKKIPHFRTLN). Residues 160–180 (WFFLFTSFFFFYAKPILITLA) form a helical membrane-spanning segment. Residues 181–192 (NYYPDIFQHFVR) are Cytoplasmic-facing. A helical membrane pass occupies residues 193-213 (YHLWHSFSLYCIGFVLFILTL). Residues 214–240 (RKGVYRYQFSQLTWTLMILMMVVVQSN) are Extracellular-facing. A helical membrane pass occupies residues 241 to 261 (FLISNIYQGLIWFILPVSIIV). Residues 262-293 (CNDIFAYFNGFFLGKKFINRPLMKISPNKTWE) are Cytoplasmic-facing. A helical transmembrane segment spans residues 294-314 (GFIGATGWTLLFAYYFCGFLL). The Extracellular portion of the chain corresponds to 315–375 (KYDWIVCPKG…FTYIPIQFHA (61 aa)). A helical membrane pass occupies residues 376–396 (LVLALFGSLIAPFGGFFASGI). Residues 397–479 (KRAYKVKDFD…IEFTTGTITA (83 aa)) lie on the Cytoplasmic side of the membrane.

It belongs to the CDS family.

It localises to the membrane. The catalysed reaction is a 1,2-diacyl-sn-glycero-3-phosphate + CTP + H(+) = a CDP-1,2-diacyl-sn-glycerol + diphosphate. The protein operates within phospholipid metabolism; CDP-diacylglycerol biosynthesis; CDP-diacylglycerol from sn-glycerol 3-phosphate: step 3/3. The sequence is that of Probable phosphatidate cytidylyltransferase (cdsA) from Dictyostelium discoideum (Social amoeba).